The sequence spans 368 residues: Homoserine dehydrogenase (368 aa).

Val12, Gly14, and Val15 together coordinate NAD(+). Residue Val15 participates in NADP(+) binding. NADPH contacts are provided by Val15, Lys59, Thr95, Ser96, and Lys119. An NAD(+)-binding site is contributed by Thr95. Thr95 is a binding site for NADP(+). Lys119 lines the NADP(+) pocket. Na(+) contacts are provided by Glu146, Val149, Ala151, and Leu153. NADP(+)-binding residues include Gly209 and Glu212. Positions 212 and 223 each coordinate L-homoserine. Lys227 (proton donor) is an active-site residue. Position 349 (Gly349) interacts with NAD(+). An NADP(+)-binding site is contributed by Gly349. Position 349 (Gly349) interacts with NADPH.

This sequence belongs to the homoserine dehydrogenase family. Requires a metal cation as cofactor.

It carries out the reaction L-homoserine + NADP(+) = L-aspartate 4-semialdehyde + NADPH + H(+). The enzyme catalyses L-homoserine + NAD(+) = L-aspartate 4-semialdehyde + NADH + H(+). It participates in amino-acid biosynthesis; L-methionine biosynthesis via de novo pathway; L-homoserine from L-aspartate: step 3/3. The protein operates within amino-acid biosynthesis; L-threonine biosynthesis; L-threonine from L-aspartate: step 3/5. Catalyzes the conversion of L-aspartate-beta-semialdehyde (L-Asa) to L-homoserine (L-Hse), the third step in the biosynthesis of amino acids that derive from aspartate (the aspartate family of amino acids), including methioinine and threonine, the latter of which is a precursor to isoleucine; production of homoserine leads to a branch-point in the pathway as it can either be O-phosphorylated for processing to threonine, or O-acylated for processing to methionine. The chain is Homoserine dehydrogenase from Emericella nidulans (strain FGSC A4 / ATCC 38163 / CBS 112.46 / NRRL 194 / M139) (Aspergillus nidulans).